The sequence spans 184 residues: Holliday junction branch migration complex subunit RuvA (184 aa).

The domain I stretch occupies residues 1 to 64 (MIKAIEGIIT…EDANLLYGFI (64 aa)). The segment at 65–137 (KESEQRIFEM…LSDAKFGEIN (73 aa)) is domain II. Position 137 (Asn-137) is a region of interest, flexible linker. The interval 138–184 (SMPSYQNEAFMALESLGFKRDRISKVLNECSSNDTASLIKEALKKLA) is domain III.

It belongs to the RuvA family. Homotetramer. Forms an RuvA(8)-RuvB(12)-Holliday junction (HJ) complex. HJ DNA is sandwiched between 2 RuvA tetramers; dsDNA enters through RuvA and exits via RuvB. An RuvB hexamer assembles on each DNA strand where it exits the tetramer. Each RuvB hexamer is contacted by two RuvA subunits (via domain III) on 2 adjacent RuvB subunits; this complex drives branch migration. In the full resolvosome a probable DNA-RuvA(4)-RuvB(12)-RuvC(2) complex forms which resolves the HJ.

The protein resides in the cytoplasm. Its function is as follows. The RuvA-RuvB-RuvC complex processes Holliday junction (HJ) DNA during genetic recombination and DNA repair, while the RuvA-RuvB complex plays an important role in the rescue of blocked DNA replication forks via replication fork reversal (RFR). RuvA specifically binds to HJ cruciform DNA, conferring on it an open structure. The RuvB hexamer acts as an ATP-dependent pump, pulling dsDNA into and through the RuvAB complex. HJ branch migration allows RuvC to scan DNA until it finds its consensus sequence, where it cleaves and resolves the cruciform DNA. The polypeptide is Holliday junction branch migration complex subunit RuvA (Campylobacter fetus subsp. fetus (strain 82-40)).